Reading from the N-terminus, the 195-residue chain is GTP cyclohydrolase 1 (195 aa).

Positions 86, 89, and 158 each coordinate Zn(2+).

Belongs to the GTP cyclohydrolase I family. Homomer.

The enzyme catalyses GTP + H2O = 7,8-dihydroneopterin 3'-triphosphate + formate + H(+). It participates in cofactor biosynthesis; 7,8-dihydroneopterin triphosphate biosynthesis; 7,8-dihydroneopterin triphosphate from GTP: step 1/1. In Ruminiclostridium cellulolyticum (strain ATCC 35319 / DSM 5812 / JCM 6584 / H10) (Clostridium cellulolyticum), this protein is GTP cyclohydrolase 1.